We begin with the raw amino-acid sequence, 671 residues long: Acetyl-coenzyme A synthetase 1 (671 aa).

CoA contacts are provided by residues 210–213 (RGGK) and T329. ATP is bound by residues 405-407 (GEP), 429-434 (DTYWQT), D520, and R535. S543 contacts CoA. Residue R546 coordinates ATP. R605 lines the CoA pocket.

Belongs to the ATP-dependent AMP-binding enzyme family.

It carries out the reaction acetate + ATP + CoA = acetyl-CoA + AMP + diphosphate. This chain is Acetyl-coenzyme A synthetase 1 (ACS1), found in Debaryomyces hansenii (strain ATCC 36239 / CBS 767 / BCRC 21394 / JCM 1990 / NBRC 0083 / IGC 2968) (Yeast).